A 367-amino-acid chain; its full sequence is Centromere protein L (367 aa).

The protein belongs to the CENP-L/IML3 family.

The protein resides in the nucleus. The protein localises to the chromosome. Its subcellular location is the centromere. Probable component of a centromeric complex involved in assembly of kinetochore proteins, mitotic progression and chromosome segregation. The chain is Centromere protein L (cenpl) from Danio rerio (Zebrafish).